The following is a 245-amino-acid chain: NAD(P)H-quinone oxidoreductase subunit K (245 aa).

4 residues coordinate [4Fe-4S] cluster: cysteine 58, cysteine 59, cysteine 123, and cysteine 154.

The protein belongs to the complex I 20 kDa subunit family. NDH-1 can be composed of about 15 different subunits; different subcomplexes with different compositions have been identified which probably have different functions. [4Fe-4S] cluster serves as cofactor.

Its subcellular location is the cellular thylakoid membrane. The catalysed reaction is a plastoquinone + NADH + (n+1) H(+)(in) = a plastoquinol + NAD(+) + n H(+)(out). The enzyme catalyses a plastoquinone + NADPH + (n+1) H(+)(in) = a plastoquinol + NADP(+) + n H(+)(out). NDH-1 shuttles electrons from an unknown electron donor, via FMN and iron-sulfur (Fe-S) centers, to quinones in the respiratory and/or the photosynthetic chain. The immediate electron acceptor for the enzyme in this species is believed to be plastoquinone. Couples the redox reaction to proton translocation, and thus conserves the redox energy in a proton gradient. Cyanobacterial NDH-1 also plays a role in inorganic carbon-concentration. In Trichormus variabilis (strain ATCC 29413 / PCC 7937) (Anabaena variabilis), this protein is NAD(P)H-quinone oxidoreductase subunit K.